A 101-amino-acid chain; its full sequence is Protein Tat (101 aa).

The tract at residues 1-20 (MEVVDPNLDPWKHPGSQPET) is disordered. The segment at 1-24 (MEVVDPNLDPWKHPGSQPETPCNK) is interaction with human CREBBP. The segment at 1–48 (MEVVDPNLDPWKHPGSQPETPCNKCYCKKCCFHCQLCFTRKGLGISYG) is transactivation. Cys22, Cys25, and Cys27 together coordinate Zn(2+). Residues 22–37 (CNKCYCKKCCFHCQLC) are cysteine-rich. Lys28 bears the N6-acetyllysine; by host PCAF mark. Zn(2+)-binding residues include Cys30, His33, Cys34, and Cys37. The segment at 38 to 48 (FTRKGLGISYG) is core. Residues 47-101 (YGRKKRRQRRRTPQSGEVHQDPVSKQPLSQTRGDPKGPEESKKKVESKTKTDPSD) form a disordered region. Positions 48–58 (GRKKRRQRRRT) are enriched in basic residues. The Nuclear localization signal, RNA-binding (TAR), and protein transduction signature appears at 49–57 (RKKRRQRRR). The interval 49-86 (RKKRRQRRRTPQSGEVHQDPVSKQPLSQTRGDPKGPEE) is interaction with the host capping enzyme RNGTT. Lys50 and Lys51 each carry N6-acetyllysine; by host EP300 and GCN5L2. An asymmetric dimethylarginine; by host PRMT6 mark is found at Arg52 and Arg53. Lys71 participates in a covalent cross-link: Glycyl lysine isopeptide (Lys-Gly) (interchain with G-Cter in ubiquitin). The Cell attachment site motif lies at 78–80 (RGD). Basic and acidic residues predominate over residues 79–101 (GDPKGPEESKKKVESKTKTDPSD).

This sequence belongs to the lentiviruses Tat family. As to quaternary structure, interacts with host CCNT1. Associates with the P-TEFb complex composed at least of Tat, P-TEFb (CDK9 and CCNT1), TAR RNA, RNA Pol II. Recruits the HATs CREBBP, TAF1/TFIID, EP300, PCAF and GCN5L2. Interacts with host KAT5/Tip60; this interaction targets the latter to degradation. Interacts with the host deacetylase SIRT1. Interacts with host capping enzyme RNGTT; this interaction stimulates RNGTT. Binds to host KDR, and to the host integrins ITGAV/ITGB3 and ITGA5/ITGB1. Interacts with host KPNB1/importin beta-1 without previous binding to KPNA1/importin alpha-1. Interacts with EIF2AK2. Interacts with host nucleosome assembly protein NAP1L1; this interaction may be required for the transport of Tat within the nucleus, since the two proteins interact at the nuclear rim. Interacts with host C1QBP/SF2P32; this interaction involves lysine-acetylated Tat. Interacts with the host chemokine receptors CCR2, CCR3 and CXCR4. Interacts with host DPP4/CD26; this interaction may trigger an anti-proliferative effect. Interacts with host LDLR. Interacts with the host extracellular matrix metalloproteinase MMP1. Interacts with host PRMT6; this interaction mediates Tat's methylation. Interacts with, and is ubiquitinated by MDM2/Hdm2. Interacts with host PSMC3 and HTATIP2. Interacts with STAB1; this interaction may overcome SATB1-mediated repression of IL2 and IL2RA (interleukin) in T cells by binding to the same domain than HDAC1. Interacts (when acetylated) with human CDK13, thereby increasing HIV-1 mRNA splicing and promoting the production of the doubly spliced HIV-1 protein Nef. Interacts with host TBP; this interaction modulates the activity of transcriptional pre-initiation complex. Interacts with host RELA. Interacts with host PLSCR1; this interaction negatively regulates Tat transactivation activity by altering its subcellular distribution. Post-translationally, asymmetrical arginine methylation by host PRMT6 seems to diminish the transactivation capacity of Tat and affects the interaction with host CCNT1. Acetylation by EP300, CREBBP, GCN5L2/GCN5 and PCAF regulates the transactivation activity of Tat. EP300-mediated acetylation of Lys-50 promotes dissociation of Tat from the TAR RNA through the competitive binding to PCAF's bromodomain. In addition, the non-acetylated Tat's N-terminus can also interact with PCAF. PCAF-mediated acetylation of Lys-28 enhances Tat's binding to CCNT1. Lys-50 is deacetylated by SIRT1. In terms of processing, polyubiquitination by host MDM2 does not target Tat to degradation, but activates its transactivation function and fosters interaction with CCNT1 and TAR RNA. Post-translationally, phosphorylated by EIF2AK2 on serine and threonine residues adjacent to the basic region important for TAR RNA binding and function. Phosphorylation of Tat by EIF2AK2 is dependent on the prior activation of EIF2AK2 by dsRNA.

It is found in the host nucleus. The protein localises to the host nucleolus. The protein resides in the host cytoplasm. Its subcellular location is the secreted. Its function is as follows. Transcriptional activator that increases RNA Pol II processivity, thereby increasing the level of full-length viral transcripts. Recognizes a hairpin structure at the 5'-LTR of the nascent viral mRNAs referred to as the transactivation responsive RNA element (TAR) and recruits the cyclin T1-CDK9 complex (P-TEFb complex) that will in turn hyperphosphorylate the RNA polymerase II to allow efficient elongation. The CDK9 component of P-TEFb and other Tat-activated kinases hyperphosphorylate the C-terminus of RNA Pol II that becomes stabilized and much more processive. Other factors such as HTATSF1/Tat-SF1, SUPT5H/SPT5, and HTATIP2 are also important for Tat's function. Besides its effect on RNA Pol II processivity, Tat induces chromatin remodeling of proviral genes by recruiting the histone acetyltransferases (HATs) CREBBP, EP300 and PCAF to the chromatin. This also contributes to the increase in proviral transcription rate, especially when the provirus integrates in transcriptionally silent region of the host genome. To ensure maximal activation of the LTR, Tat mediates nuclear translocation of NF-kappa-B by interacting with host RELA. Through its interaction with host TBP, Tat may also modulate transcription initiation. Tat can reactivate a latently infected cell by penetrating in it and transactivating its LTR promoter. In the cytoplasm, Tat is thought to act as a translational activator of HIV-1 mRNAs. Extracellular circulating Tat can be endocytosed by surrounding uninfected cells via the binding to several surface receptors such as CD26, CXCR4, heparan sulfate proteoglycans (HSPG) or LDLR. Neurons are rarely infected, but they internalize Tat via their LDLR. Through its interaction with nuclear HATs, Tat is potentially able to control the acetylation-dependent cellular gene expression. Modulates the expression of many cellular genes involved in cell survival, proliferation or in coding for cytokines or cytokine receptors. Tat plays a role in T-cell and neurons apoptosis. Tat induced neurotoxicity and apoptosis probably contribute to neuroAIDS. Circulating Tat also acts as a chemokine-like and/or growth factor-like molecule that binds to specific receptors on the surface of the cells, affecting many cellular pathways. In the vascular system, Tat binds to ITGAV/ITGB3 and ITGA5/ITGB1 integrins dimers at the surface of endothelial cells and competes with bFGF for heparin-binding sites, leading to an excess of soluble bFGF. This chain is Protein Tat, found in Homo sapiens (Human).